We begin with the raw amino-acid sequence, 73 residues long: U-scoloptoxin(15)-Sa1a (73 aa).

Positions 1-20 (MKFHIIFCLLAALMMTSAFA) are cleaved as a signal peptide.

Belongs to the scoloptoxin-15 family. In terms of processing, contains 2 disulfide bonds. In terms of tissue distribution, expressed by the venom gland.

Its subcellular location is the secreted. The chain is U-scoloptoxin(15)-Sa1a from Scolopendra alternans (Florida Keys giant centipede).